Here is a 1196-residue protein sequence, read N- to C-terminus: Calcium-activated potassium channel subunit alpha-1 (1196 aa).

The Extracellular portion of the chain corresponds to Met1–Met52. Residues Trp53–Val73 form a helical membrane-spanning segment. Topologically, residues Trp74 to Arg146 are cytoplasmic. The chain crosses the membrane as a helical span at residues Val147–Ser167. Topologically, residues Ser168–Thr182 are extracellular. Residues Leu183–Ala203 traverse the membrane as a helical segment. Residues Ala204–Lys207 are Cytoplasmic-facing. The chain crosses the membrane as a helical span at residues Leu208–Val228. Residues Ser229–Leu232 lie on the Extracellular side of the membrane. Residues Asn233–Ile253 traverse the membrane as a helical; Voltage-sensor segment. Residues Leu254 to Leu268 lie on the Cytoplasmic side of the membrane. Residues Val269–Val289 form a helical membrane-spanning segment. Over Glu290–Gln303 the chain is Extracellular. An intramembrane region (pore-forming) is located at residues Asp304–Val326. A Selectivity for potassium motif is present at residues Thr320 to Tyr323. The Extracellular portion of the chain corresponds to Tyr327–Leu335. Residues Phe336–Ile356 form a helical membrane-spanning segment. At Glu357–Cys1196 the chain is on the cytoplasmic side. The RCK N-terminal 1 domain occupies Arg375–Ile517. Glu407, Gln430, and Glu432 together coordinate Mg(2+). A segment S7 region spans residues Leu524–Phe544. The segment S8 stretch occupies residues Leu581 to Ile601. Residues Cys645–His649 form a heme-binding motif region. The segment at Ser672–Arg697 is disordered. Residues Val748 to Val768 are segment S9. The region spanning Ser750–Pro894 is the RCK N-terminal 2 domain. A Calcium bowl motif is present at residues Thr914–Glu936. Ca(2+) is bound by residues Gln923, Asp926, Asp929, and Asp931. Positions Phe943–Phe963 are segment S10. Residues Ala1098–Ser1119 are compositionally biased toward low complexity. The tract at residues Ala1098–Lys1149 is disordered. Residues Ile1120–Gln1129 show a composition bias toward polar residues. Positions Lys1133–Lys1149 are enriched in basic and acidic residues.

Belongs to the potassium channel family. Calcium-activated (TC 1.A.1.3) subfamily. KCa1.1/KCNMA1 sub-subfamily. As to quaternary structure, homotetramer; which constitutes the calcium-activated potassium channel. Expressed in both the somites and neural tube of 1 day embryos. Within the nervous system, it is restricted to dorsal parts, and expressed centrally in regions dedicated to processing of sensory information. Six hours later, it is expressed segmentally within the somites. At this time, it is expressed in a primary sensory organ, the trigeminal ganglion. By 2 days, it is also expressed in other primary sensory organs, such as the otic vesicle, and the eye. Within the retina, it is expressed to an internal layer. In the developing otic vesicle, it is abundantly expressed near the apical surface. Isoform 3 is neural-specific, and is only expressed during late stages of neuronal differentiation.

The protein resides in the cell membrane. It carries out the reaction K(+)(in) = K(+)(out). Ethanol and carbon monoxide-bound heme increase channel activation. Heme inhibits channel activation. Potassium channel activated by both membrane depolarization or increase in cytosolic Ca(2+) that mediates export of K(+). It is also activated by the concentration of cytosolic Mg(2+). Its activation dampens the excitatory events that elevate the cytosolic Ca(2+) concentration and/or depolarize the cell membrane. It therefore contributes to repolarization of the membrane potential. Plays a key role in controlling excitability in a number of systems, such as regulation of the contraction of smooth muscle, the tuning of hair cells in the cochlea, regulation of transmitter release, and innate immunity. In smooth muscles, its activation by high level of Ca(2+), caused by ryanodine receptors in the sarcoplasmic reticulum, regulates the membrane potential. In cochlea cells, its number and kinetic properties partly determine the characteristic frequency of each hair cell and thereby helps to establish a tonotopic map. Highly sensitive to both iberiotoxin (IbTx) and charybdotoxin (CTX). The protein is Calcium-activated potassium channel subunit alpha-1 (kcnma1) of Xenopus laevis (African clawed frog).